The chain runs to 184 residues: Protein C8 (184 aa).

Residues 1–21 (MSSIRFIACLYLISIFGNCHE) form the signal peptide.

Belongs to the poxviridae C8 protein family.

This Vaccinia virus (strain Copenhagen) (VACV) protein is Protein C8.